A 174-amino-acid polypeptide reads, in one-letter code: Chorion class CB protein M5H4 (174 aa).

The first 20 residues, 1 to 20 (MTTIVVLICASALFVQLAFS), serve as a signal peptide directing secretion. The segment at 21–71 (QCLGRDPVIGFGGAYGSGWGGYDAISPYDGLGYGVPYSAGFIGLSPSNLAA) is left arm. The interval 72 to 142 (SCGGALAVNS…GDGAIGIVSE (71 aa)) is central domain. Residues 143–174 (APIVAPASIGYGQWPVNAGYKGIGPCGCGGLY) form a right arm region.

Belongs to the chorion protein family.

Functionally, this protein is one of many from the eggshell of the silk moth. The sequence is that of Chorion class CB protein M5H4 from Bombyx mori (Silk moth).